The sequence spans 304 residues: DCN1-like protein 3 (304 aa).

2 disordered regions span residues 1–87 (MGQC…EESS) and 284–304 (EVEGRGTLSSGQEGLCPEEQT). The N-myristoyl glycine moiety is linked to residue G2. A DCUN1 domain is found at 86–278 (SSLQRLEELF…LFDTFVEWEM (193 aa)).

Part of a complex containing DCUN1D3, CUL3 and RBX1. Interacts (via the DCUN1 domain) with the unneddylated cullins: interacts with CUL1, CUL2, CUL3, CUL4A, CUL4B and CUL5; these interactions promote the cullin neddylation and the identity of the cullin dictates the affinity of the interaction. Interacts preferentially with CUL3; this interaction triggers the relocalization of CUL3 to the cell membrane where CUL3 is neddylated. Interacts (via DCUN1 domain) with RBX1. May also interact with regulators or subunits of cullin-RING ligases such as RNF7, ELOB and DDB1; these interactions are bridged by cullins. Interacts (via DCUN1 domain) with CAND1; this interaction is bridged by cullins and strongly inhibits cullin neddylation. These CAND-cullin-DCNL complexes can only be neddylated in the presence of a substrate adapter. Interacts (via DCUN1 domain) with the N-terminally acetylated form of UBE2M and UBE2F. In terms of tissue distribution, highest levels of expression are in the testis. Very low levels of expression in the heart, brain, skeletal muscle, kidney, liver, spleen, lung and ovary.

The protein resides in the cell membrane. The protein localises to the cytoplasm. Its subcellular location is the nucleus. It localises to the perinuclear region. Functionally, contributes to the neddylation of all cullins by transferring NEDD8 from N-terminally acetylated NEDD8-conjugating E2s enzyme to different cullin C-terminal domain-RBX complexes and may play a role in the cell cycle progression by regulating the SCF ubiquitin E3 ligase complex, after UV damage. At the cell membrane, can promote and as well inhibit cullins neddylation. In Mus musculus (Mouse), this protein is DCN1-like protein 3.